The primary structure comprises 292 residues: GTP cyclohydrolase FolE2 (292 aa).

Belongs to the GTP cyclohydrolase IV family.

It catalyses the reaction GTP + H2O = 7,8-dihydroneopterin 3'-triphosphate + formate + H(+). Its pathway is cofactor biosynthesis; 7,8-dihydroneopterin triphosphate biosynthesis; 7,8-dihydroneopterin triphosphate from GTP: step 1/1. Functionally, converts GTP to 7,8-dihydroneopterin triphosphate. The polypeptide is GTP cyclohydrolase FolE2 (Staphylococcus carnosus (strain TM300)).